We begin with the raw amino-acid sequence, 62 residues long: Large ribosomal subunit protein bL28 (62 aa).

This sequence belongs to the bacterial ribosomal protein bL28 family.

This is Large ribosomal subunit protein bL28 from Thermoanaerobacter pseudethanolicus (strain ATCC 33223 / 39E) (Clostridium thermohydrosulfuricum).